The primary structure comprises 554 residues: MTPLIFVTGGVVSSLGKGIAAASLASILEARGLKVTMMKLDPYINVDPGTMSPFQHGEVYVTDDGAETDLDLGHYERYVRTRLSRKNSVTTGRIYENVIRKERRGDYLGATVQVIPHITDEIRRCIDEATAGFDVALIEIGGTVGDIESLPFLEAIRQVRTERGAEKAMFMHLTLVPYIAAAGELKTKPTQHSVKELRSIGIQPDVLLCRSEQAVPDSERRKIALFTNVSERAVISCPDIDVLYGMPLELRRQGLDELVIDQFKLRDKVAAADLSEWEAVVDAVKHPLDEVTIAVVGKYVDHQDAYKSVAEALKHGGLRQRTKVNLTWLEAQDLEGSDMAALQGIDGILVPGGFGDRGFEGKVQTSKYAREHKVPYFGICYGMQAAVVDYARHVADLDAANSTENDRQSPHPVIGLITEWRTATGEVEKRDEKSDLGGTMRLGLQEQRLKPGTLAREVYGKDVVAERHRHRYEFNNRYRTQLEDAGLVICGKSMDDTLVEMVELPRDTHPWFLACQAHPEFLSTPRDGHPLFIGFVRAAREKKAGGKLLKEARA.

The amidoligase domain stretch occupies residues 1–265 (MTPLIFVTGG…DELVIDQFKL (265 aa)). A CTP-binding site is contributed by Ser-13. Residue Ser-13 participates in UTP binding. ATP contacts are provided by residues 14 to 19 (SLGKGI) and Asp-71. Residues Asp-71 and Glu-139 each coordinate Mg(2+). CTP is bound by residues 146-148 (DIE), 186-191 (KTKPTQ), and Lys-222. Residues 186–191 (KTKPTQ) and Lys-222 each bind UTP. A Glutamine amidotransferase type-1 domain is found at 292 to 545 (TIAVVGKYVD…VRAAREKKAG (254 aa)). Position 353 (Gly-353) interacts with L-glutamine. The active-site Nucleophile; for glutamine hydrolysis is the Cys-380. L-glutamine contacts are provided by residues 381 to 384 (YGMQ), Glu-404, and Arg-471. Catalysis depends on residues His-518 and Glu-520.

The protein belongs to the CTP synthase family. As to quaternary structure, homotetramer.

The catalysed reaction is UTP + L-glutamine + ATP + H2O = CTP + L-glutamate + ADP + phosphate + 2 H(+). It catalyses the reaction L-glutamine + H2O = L-glutamate + NH4(+). It carries out the reaction UTP + NH4(+) + ATP = CTP + ADP + phosphate + 2 H(+). The protein operates within pyrimidine metabolism; CTP biosynthesis via de novo pathway; CTP from UDP: step 2/2. Allosterically activated by GTP, when glutamine is the substrate; GTP has no effect on the reaction when ammonia is the substrate. The allosteric effector GTP functions by stabilizing the protein conformation that binds the tetrahedral intermediate(s) formed during glutamine hydrolysis. Inhibited by the product CTP, via allosteric rather than competitive inhibition. Its function is as follows. Catalyzes the ATP-dependent amination of UTP to CTP with either L-glutamine or ammonia as the source of nitrogen. Regulates intracellular CTP levels through interactions with the four ribonucleotide triphosphates. The sequence is that of CTP synthase from Xanthomonas campestris pv. campestris (strain 8004).